The following is a 145-amino-acid chain: Protein MMF1, mitochondrial (145 aa).

The N-terminal 17 residues, 1–17 (MFLRNSVLRTAPVLRRG), are a transit peptide targeting the mitochondrion.

This sequence belongs to the RutC family.

The protein localises to the mitochondrion matrix. Its function is as follows. Plays a role in the maintenance of mitochondrial DNA. In Saccharomyces cerevisiae (strain ATCC 204508 / S288c) (Baker's yeast), this protein is Protein MMF1, mitochondrial (MMF1).